Consider the following 141-residue polypeptide: Large ribosomal subunit protein uL11 (141 aa).

The protein belongs to the universal ribosomal protein uL11 family. As to quaternary structure, part of the ribosomal stalk of the 50S ribosomal subunit. Interacts with L10 and the large rRNA to form the base of the stalk. L10 forms an elongated spine to which L12 dimers bind in a sequential fashion forming a multimeric L10(L12)X complex. In terms of processing, one or more lysine residues are methylated.

Its function is as follows. Forms part of the ribosomal stalk which helps the ribosome interact with GTP-bound translation factors. The polypeptide is Large ribosomal subunit protein uL11 (Thermotoga sp. (strain RQ2)).